The chain runs to 1894 residues: 1,3-beta-glucan synthase component bgs2 (1894 aa).

Disordered regions lie at residues 1 to 53 and 282 to 310; these read MSWH…DSNK and GPKIKQAKKKQKRKSNKAETEGTNEPETS. Over residues 32 to 51 the composition is skewed to polar residues; the sequence is EFNNPGEESTYPQANSWNDS. A compositionally biased stretch (basic residues) spans 286–296; it reads KQAKKKQKRKS. Transmembrane regions (helical) follow at residues 530 to 550, 566 to 586, 600 to 620, 655 to 675, 710 to 730, 731 to 751, 1338 to 1358, 1394 to 1414, 1476 to 1498, 1503 to 1525, 1598 to 1618, 1637 to 1657, 1673 to 1693, 1697 to 1717, 1778 to 1798, and 1837 to 1857; these read VSLGGAVATLLMLLATIFEWI, FLILILFFILNVAPTVFVFGF, VAIVHFIFSVFTFIYFSLVPL, VSWGLWLLVFGAKFTESYFFL, ILLGIMYVTDLVLFFLDTYLW, YILVNTVFSVARSFFLGISIW, IFIMLSVQLFMVVLVNLGGMY, CIISIFIVFFISFVPLTVQEL, LLFSRFAGPSIYLGSRTLLMLLF, VWIPHLIYFWISTLAMCISPFIF, FTEIFIPLMLVPLTLVSYFFI, ILILAFLPIIVAAVVSMTFAG, FGAVLAALAHGITVFMFIIVF, WYLEAWCLAKTVLSMLCIIAI, DFFLCHLLLFLMLPVLLIPFI, and TMFFLLLIAFLALIIIPLVVA.

This sequence belongs to the glycosyltransferase 48 family. In terms of assembly, component of the 1,3-beta-glucan synthase (GS) complex, composed of at least the alternate catalytic subunits bgs1, bgs2, bgs3, and bgs4, and a regulatory subunit chr4.

The protein localises to the prospore membrane. The catalysed reaction is [(1-&gt;3)-beta-D-glucosyl](n) + UDP-alpha-D-glucose = [(1-&gt;3)-beta-D-glucosyl](n+1) + UDP + H(+). In terms of biological role, alternate catalytic subunit of the 1,3-beta-glucan synthase (GS) complex. Synthesizes 1,3-beta-glucan, a major structural component of the yeast cell wall. Has a role in ascospore development where it is required for the assembly of a functional spore wall. The chain is 1,3-beta-glucan synthase component bgs2 from Schizosaccharomyces pombe (strain 972 / ATCC 24843) (Fission yeast).